Here is a 489-residue protein sequence, read N- to C-terminus: Arginine biosynthesis bifunctional protein ArgJ 2, mitochondrial (489 aa).

The N-terminal 11 residues, 1-11 (MLLISRIGARH), are a transit peptide targeting the mitochondrion. Positions 205, 234, 245, 341, and 484 each coordinate substrate. Thr-245 functions as the Nucleophile in the catalytic mechanism.

This sequence belongs to the ArgJ family. As to quaternary structure, heterodimer of an alpha and a beta chain. Post-translationally, the alpha and beta chains are autoproteolytically processed from a single precursor protein within the mitochondrion.

The protein localises to the mitochondrion matrix. It carries out the reaction N(2)-acetyl-L-ornithine + L-glutamate = N-acetyl-L-glutamate + L-ornithine. The catalysed reaction is L-glutamate + acetyl-CoA = N-acetyl-L-glutamate + CoA + H(+). It participates in amino-acid biosynthesis; L-arginine biosynthesis; L-ornithine and N-acetyl-L-glutamate from L-glutamate and N(2)-acetyl-L-ornithine (cyclic): step 1/1. It functions in the pathway amino-acid biosynthesis; L-arginine biosynthesis; N(2)-acetyl-L-ornithine from L-glutamate: step 1/4. Its function is as follows. Catalyzes two activities which are involved in the cyclic version of arginine biosynthesis: the synthesis of acetylglutamate from glutamate and acetyl-CoA, and of ornithine by transacetylation between acetylornithine and glutamate. The sequence is that of Arginine biosynthesis bifunctional protein ArgJ 2, mitochondrial from Sclerotinia sclerotiorum (strain ATCC 18683 / 1980 / Ss-1) (White mold).